A 121-amino-acid chain; its full sequence is MSITKDQILEALAAMSVMEVVELIEAMEEKFGVSAAAAVVSGGGEAAAAEEKTEFDVILTSHGANKVAVIKALRGATGLGLKEAKTMAESSPIAVKEAISKEEADALKADLEAAGAEVEIK.

The protein belongs to the bacterial ribosomal protein bL12 family. As to quaternary structure, homodimer. Part of the ribosomal stalk of the 50S ribosomal subunit. Forms a multimeric L10(L12)X complex, where L10 forms an elongated spine to which 2 to 4 L12 dimers bind in a sequential fashion. Binds GTP-bound translation factors.

Functionally, forms part of the ribosomal stalk which helps the ribosome interact with GTP-bound translation factors. Is thus essential for accurate translation. This Shewanella halifaxensis (strain HAW-EB4) protein is Large ribosomal subunit protein bL12.